We begin with the raw amino-acid sequence, 394 residues long: Imidazolonepropionase (394 aa).

2 residues coordinate Fe(3+): His61 and His63. 2 residues coordinate Zn(2+): His61 and His63. Positions 70, 133, and 164 each coordinate 4-imidazolone-5-propanoate. N-formimidoyl-L-glutamate is bound at residue Tyr133. Residue His225 participates in Fe(3+) binding. His225 is a Zn(2+) binding site. Glu228 serves as a coordination point for 4-imidazolone-5-propanoate. Asp299 provides a ligand contact to Fe(3+). Asp299 contacts Zn(2+).

Belongs to the metallo-dependent hydrolases superfamily. HutI family. Zn(2+) serves as cofactor. It depends on Fe(3+) as a cofactor.

The protein resides in the cytoplasm. The enzyme catalyses 4-imidazolone-5-propanoate + H2O = N-formimidoyl-L-glutamate. Its pathway is amino-acid degradation; L-histidine degradation into L-glutamate; N-formimidoyl-L-glutamate from L-histidine: step 3/3. Catalyzes the hydrolytic cleavage of the carbon-nitrogen bond in imidazolone-5-propanoate to yield N-formimidoyl-L-glutamate. It is the third step in the universal histidine degradation pathway. The polypeptide is Imidazolonepropionase (Picrophilus torridus (strain ATCC 700027 / DSM 9790 / JCM 10055 / NBRC 100828 / KAW 2/3)).